We begin with the raw amino-acid sequence, 622 residues long: MYVLSETKSNFLKLIAEALKRRGLEVEEEELERLAGRPPSPEMGDLGVSLFRYAKKLGLRPEELTSELKGEIEGRLAGVKEVKAIGGFLNVELEPSWLAERALREASREDYGKWSFSGRLVVEHTSANPVHPLHVGHARNMFLGDSLVRILKNWGADVQSRFYINDMGRQVAVLVYGLLKLGRLEPPEGEKPDHWYGKVYSVANALVELNSPSKGDDEKKEWEEVLKELESKWPEIVREMKEKFDDEDPEAKVSELMKKYEEGDPEVKETFRKVVNEVLKGFKETMERVGVNVDKWDWESDLVWSGEVDKIINMAKEKGLVIEKDGALVMVFKNLNDEVRRRLRIPKGLQIPPLVLKRSDGTTLYTTRDIAYTIKKFEEFRADRVINVIAAEQRLPQIQLRLALWELGFKEYAENLIHYAYEMVNVPGMKMSGRRGRMITLDWLLDEAERRVRELVEGRSEAEDVDEVVKKVAVGAVKFAMVSVSPEKPITFKWEEVLNFERNSAPYLQYTYARAVGILRKGGEPDLERADYSKAEKYKDMILSIAEFPEVARKAAEDLKPDLIATYLLSLADKFNEFYHKEPVAKEPDEGLRNLKLALVKAVANTIRRGLWLLGVEAPARM.

Residues 127 to 137 carry the 'HIGH' region motif; sequence ANPVHPLHVGH.

The protein belongs to the class-I aminoacyl-tRNA synthetase family.

It localises to the cytoplasm. The catalysed reaction is tRNA(Arg) + L-arginine + ATP = L-arginyl-tRNA(Arg) + AMP + diphosphate. This chain is Arginine--tRNA ligase, found in Ignicoccus hospitalis (strain KIN4/I / DSM 18386 / JCM 14125).